The following is a 308-amino-acid chain: Transaldolase (308 aa).

The Schiff-base intermediate with substrate role is filled by Lys125.

The protein belongs to the transaldolase family. Type 1 subfamily. In terms of assembly, homodimer.

It localises to the cytoplasm. The enzyme catalyses D-sedoheptulose 7-phosphate + D-glyceraldehyde 3-phosphate = D-erythrose 4-phosphate + beta-D-fructose 6-phosphate. Its pathway is carbohydrate degradation; pentose phosphate pathway; D-glyceraldehyde 3-phosphate and beta-D-fructose 6-phosphate from D-ribose 5-phosphate and D-xylulose 5-phosphate (non-oxidative stage): step 2/3. Functionally, transaldolase is important for the balance of metabolites in the pentose-phosphate pathway. The polypeptide is Transaldolase (Pseudomonas savastanoi pv. phaseolicola (strain 1448A / Race 6) (Pseudomonas syringae pv. phaseolicola (strain 1448A / Race 6))).